The primary structure comprises 491 residues: MNTQQLAKLRSIVPEMRRVRHIHFVGIGGAGMGGIAEVLANEGYQISGSDLAPNPVTQQLMNLGATIYFNHRPENVRDASVVVVSSAISADNPEIVAAHEARIPVIRRAEMLAELMRFRHGIAIAGTHGKTTTTAMVSSIYAEAGLDPTFVNGGLVKAAGVHARLGHGRYLIAEADESDASFLHLQPMVAIVTNIEADHMDTYQGDFENLKQTFINFLHNLPFYGRAVMCVDDPVIRELLPRVGRQTTTYGFSEDADVRVEDYQQIGPQGHFTLLRQDKEPMRVTLNAPGRHNALNAAAAVAVATEEGIDDEAILRALESFQGTGRRFDFLGEFPLEPVNGKSGTAMLVDDYGHHPTEVDATIKAARAGWPDKNLVMLFQPHRFTRTRDLYDDFANVLTQVDTLLMLEVYPAGEAPIPGADSRSLCRTIRGRGKIDPILVPDPAQVAEMLAPVLTGNDLILVQGAGNIGKIARSLAEIKLKPQTPEEAQHD.

Position 126–132 (126–132 (GTHGKTT)) interacts with ATP.

It belongs to the MurCDEF family.

The protein resides in the cytoplasm. It catalyses the reaction UDP-N-acetyl-alpha-D-muramate + L-alanine + ATP = UDP-N-acetyl-alpha-D-muramoyl-L-alanine + ADP + phosphate + H(+). It functions in the pathway cell wall biogenesis; peptidoglycan biosynthesis. Cell wall formation. In Escherichia coli O7:K1 (strain IAI39 / ExPEC), this protein is UDP-N-acetylmuramate--L-alanine ligase.